The chain runs to 556 residues: Urocanate hydratase (556 aa).

Residues 52 to 53 (GG), glutamine 130, 176 to 178 (GMG), glutamate 196, arginine 201, 242 to 243 (NA), 263 to 267 (QTSAH), 273 to 274 (YL), and tyrosine 322 each bind NAD(+). Residue cysteine 410 is part of the active site. NAD(+) is bound at residue glycine 492.

This sequence belongs to the urocanase family. Requires NAD(+) as cofactor.

It localises to the cytoplasm. It catalyses the reaction 4-imidazolone-5-propanoate = trans-urocanate + H2O. Its pathway is amino-acid degradation; L-histidine degradation into L-glutamate; N-formimidoyl-L-glutamate from L-histidine: step 2/3. Catalyzes the conversion of urocanate to 4-imidazolone-5-propionate. This is Urocanate hydratase from Shewanella sp. (strain ANA-3).